A 410-amino-acid polypeptide reads, in one-letter code: Peptidase T (410 aa).

His79 lines the Zn(2+) pocket. Residue Asp81 is part of the active site. Asp142 contributes to the Zn(2+) binding site. Catalysis depends on Glu176, which acts as the Proton acceptor. 3 residues coordinate Zn(2+): Glu177, Asp199, and His381.

Belongs to the peptidase M20B family. It depends on Zn(2+) as a cofactor.

The protein resides in the cytoplasm. The catalysed reaction is Release of the N-terminal residue from a tripeptide.. Its function is as follows. Cleaves the N-terminal amino acid of tripeptides. This Bacillus pumilus (strain SAFR-032) protein is Peptidase T.